Here is a 265-residue protein sequence, read N- to C-terminus: Mlc titration factor A (265 aa).

Zn(2+)-binding residues include H111, H148, H152, and E211.

This sequence belongs to the MtfA family. In terms of assembly, interacts with Mlc. Zn(2+) is required as a cofactor.

It localises to the cytoplasm. In terms of biological role, involved in the modulation of the activity of the glucose-phosphotransferase system (glucose-PTS). Interacts with the transcriptional repressor Mlc, preventing its interaction with DNA and leading to the modulation of expression of genes regulated by Mlc, including ptsG, which encodes the PTS system glucose-specific EIICB component. Functionally, shows zinc-dependent metallopeptidase activity. The protein is Mlc titration factor A of Pectobacterium atrosepticum (strain SCRI 1043 / ATCC BAA-672) (Erwinia carotovora subsp. atroseptica).